Consider the following 252-residue polypeptide: Ribosomal RNA small subunit methyltransferase J (252 aa).

S-adenosyl-L-methionine is bound by residues 101–102 (RD), 117–118 (ER), 153–154 (SS), and D171.

This sequence belongs to the methyltransferase superfamily. RsmJ family.

The protein localises to the cytoplasm. The enzyme catalyses guanosine(1516) in 16S rRNA + S-adenosyl-L-methionine = N(2)-methylguanosine(1516) in 16S rRNA + S-adenosyl-L-homocysteine + H(+). Functionally, specifically methylates the guanosine in position 1516 of 16S rRNA. The chain is Ribosomal RNA small subunit methyltransferase J from Salmonella schwarzengrund (strain CVM19633).